The primary structure comprises 126 residues: uncharacterized protein (126 aa).

The protein belongs to the SufE family.

This is an uncharacterized protein from Haemophilus influenzae (strain ATCC 51907 / DSM 11121 / KW20 / Rd).